The sequence spans 170 residues: MAAPVMSALGRLQGLIRTERSLLTHVQSRCIQTTSVCLKNRAARVRVGKGDKPVTYEAAHPPHYIAHRKGWLSQHTGNLDGEGGAAERTIEDVFIRRFIFGTFHGCLANEIVIKRRANLLIICAIFIRKMPTQKFYFLIGYTETLLSFLYKCPVKLEVQTVEEKVIYKYL.

The transit peptide at 1–30 (MAAPVMSALGRLQGLIRTERSLLTHVQSRC) directs the protein to the mitochondrion.

It belongs to the universal ribosomal protein uS3 family. Component of the mitochondrial ribosome small subunit (28S) which comprises a 12S rRNA and about 30 distinct proteins.

The protein localises to the mitochondrion. This is Small ribosomal subunit protein uS3mA (mrps24-a) from Xenopus laevis (African clawed frog).